A 1792-amino-acid polypeptide reads, in one-letter code: BTB/POZ domain-containing protein 8 (1792 aa).

BTB domains follow at residues 58-127 (TDVT…NIKN) and 206-273 (PDID…DIPD). Disordered regions lie at residues 528-554 (DKGDDRRLGKKPIFSSSQQRKQVSDSG), 581-658 (SDGL…PRQV), 670-692 (TGQKNLLNGKGVRNQEGQISGAR), 707-768 (KPLK…CDSP), 788-815 (SRPVSRVTNGTSNKKSIHEQDTNVNNSV), 831-989 (AILK…KPHK), 1151-1283 (ERTN…SNDR), and 1519-1607 (SIDS…KSLD). Composition is skewed to polar residues over residues 541–552 (FSSSQQRKQVSD) and 588–601 (GHSSSTNRNSINKT). Composition is skewed to basic and acidic residues over residues 602–625 (LKQDDVKEKDGTKIASKITKELKT) and 640–650 (SKTENGDKARL). Positions 724–740 (GPSSRSTDSSMEFSIST) are enriched in polar residues. Residues 744–758 (DEPKENGSTEEEKPS) show a composition bias toward basic and acidic residues. Residues 838–865 (TSNGCTAAQQRTKSTPSNLTKTQGSQGE) show a composition bias toward polar residues. The segment covering 866-877 (SPNSVKSSVSSR) has biased composition (low complexity). 2 stretches are compositionally biased toward basic and acidic residues: residues 878-891 (QSDENVAKLDHNTT) and 927-939 (KKGETLNNKDSKQ). A compositionally biased stretch (polar residues) spans 947-956 (ISKTQPSSQR). Over residues 969–987 (MFHDVRDNNNKDSVSEQKP) the composition is skewed to basic and acidic residues. Composition is skewed to polar residues over residues 1151 to 1160 (ERTNGTLNSA) and 1195 to 1215 (SDVSSKCFSGQLSEKNSPKNM). Low complexity predominate over residues 1250 to 1259 (SDTGSATTSS). A compositionally biased stretch (basic and acidic residues) spans 1566 to 1594 (IQQRSKFLDSDVKSQERPCHLDLHQREPN). Positions 1597 to 1607 (IPKNSSTKSLD) are enriched in polar residues.

In terms of assembly, interacts (via N-terminus) with adapter protein complex AP-2 subunits alpha (AP2A1) and beta (AP2B1). In terms of tissue distribution, highly expressed in fetal brain. Weakly expressed in adult brain and prostate.

It is found in the cell projection. Its subcellular location is the axon. The protein resides in the presynapse. It localises to the cytoplasmic vesicle. The protein localises to the clathrin-coated vesicle. It is found in the nucleus. In terms of biological role, involved in clathrin-mediated endocytosis at the synapse. Plays a role in neuronal development and in synaptic vesicle recycling in mature neurons, a process required for normal synaptic transmission. The polypeptide is BTB/POZ domain-containing protein 8 (Homo sapiens (Human)).